A 499-amino-acid chain; its full sequence is Kynurenine 3-monooxygenase 3 (499 aa).

The protein belongs to the aromatic-ring hydroxylase family. KMO subfamily. FAD is required as a cofactor.

The protein localises to the mitochondrion outer membrane. The enzyme catalyses L-kynurenine + NADPH + O2 + H(+) = 3-hydroxy-L-kynurenine + NADP(+) + H2O. It participates in cofactor biosynthesis; NAD(+) biosynthesis; quinolinate from L-kynurenine: step 1/3. Its function is as follows. Catalyzes the hydroxylation of L-kynurenine (L-Kyn) to form 3-hydroxy-L-kynurenine (L-3OHKyn). Required for synthesis of quinolinic acid. In Aspergillus niger (strain ATCC MYA-4892 / CBS 513.88 / FGSC A1513), this protein is Kynurenine 3-monooxygenase 3 (bna4-3).